The sequence spans 27 residues: uncharacterized protein (27 aa).

It localises to the plastid. It is found in the chloroplast. This is an uncharacterized protein from Marchantia polymorpha (Common liverwort).